A 953-amino-acid polypeptide reads, in one-letter code: UvrABC system protein A (953 aa).

An ATP-binding site is contributed by 33–40 (GLSGSGKS). ABC transporter domains are found at residues 320-599 (WGST…EESI) and 619-949 (GHDN…RYLK). An ATP-binding site is contributed by 652–659 (GVSGSGKS). Residues 752-778 (CEACQGDGLIKIEMHFLPDVYVKCDIC) form a C4-type zinc finger.

The protein belongs to the ABC transporter superfamily. UvrA family. As to quaternary structure, forms a heterotetramer with UvrB during the search for lesions.

Its subcellular location is the cytoplasm. The UvrABC repair system catalyzes the recognition and processing of DNA lesions. UvrA is an ATPase and a DNA-binding protein. A damage recognition complex composed of 2 UvrA and 2 UvrB subunits scans DNA for abnormalities. When the presence of a lesion has been verified by UvrB, the UvrA molecules dissociate. This chain is UvrABC system protein A, found in Rickettsia prowazekii (strain Madrid E).